A 658-amino-acid chain; its full sequence is DNA mismatch repair protein MutL (658 aa).

Disordered stretches follow at residues 114-137 and 437-456; these read RQND…PTAA and RFGN…PLSD. Residues 442-456 show a composition bias toward polar residues; sequence PSETPAPQTDTPLSD.

Belongs to the DNA mismatch repair MutL/HexB family.

Functionally, this protein is involved in the repair of mismatches in DNA. It is required for dam-dependent methyl-directed DNA mismatch repair. May act as a 'molecular matchmaker', a protein that promotes the formation of a stable complex between two or more DNA-binding proteins in an ATP-dependent manner without itself being part of a final effector complex. The chain is DNA mismatch repair protein MutL from Neisseria meningitidis serogroup B (strain ATCC BAA-335 / MC58).